The following is a 180-amino-acid chain: ATP-dependent protease subunit HslV (180 aa).

T7 is a catalytic residue. Na(+) is bound by residues G165, C168, and T171.

The protein belongs to the peptidase T1B family. HslV subfamily. As to quaternary structure, a double ring-shaped homohexamer of HslV is capped on each side by a ring-shaped HslU homohexamer. The assembly of the HslU/HslV complex is dependent on binding of ATP.

It localises to the cytoplasm. The catalysed reaction is ATP-dependent cleavage of peptide bonds with broad specificity.. With respect to regulation, allosterically activated by HslU binding. In terms of biological role, protease subunit of a proteasome-like degradation complex believed to be a general protein degrading machinery. The chain is ATP-dependent protease subunit HslV from Bacillus cereus (strain Q1).